Consider the following 59-residue polypeptide: Large ribosomal subunit protein uL30 (59 aa).

It belongs to the universal ribosomal protein uL30 family. Part of the 50S ribosomal subunit.

In Yersinia pseudotuberculosis serotype I (strain IP32953), this protein is Large ribosomal subunit protein uL30.